A 599-amino-acid polypeptide reads, in one-letter code: Membrane protein insertase YidC (599 aa).

Residues 6 to 26 (NYFIAIALSVVIVLAWQFLYM) form a helical membrane-spanning segment. Residues 35-78 (RAEEARQAQQQTTQQQPAPGAAPGATVEGAPPASSTQAAATATR) are disordered. Residues 41–76 (QAQQQTTQQQPAPGAAPGATVEGAPPASSTQAAATA) show a composition bias toward low complexity. 4 helical membrane passes run 378–398 (FGVAILLTTIVVKALFFPLAS), 448–468 (WPMLLQIPVFFALYKVIYVTI), 501–521 (VPHFLMIGVWPLVMGITMFLQ), and 536–556 (IFTWMPLIFTFMLASFPAGLV).

It belongs to the OXA1/ALB3/YidC family. Type 1 subfamily. Interacts with the Sec translocase complex via SecD. Specifically interacts with transmembrane segments of nascent integral membrane proteins during membrane integration.

It localises to the cell inner membrane. Required for the insertion and/or proper folding and/or complex formation of integral membrane proteins into the membrane. Involved in integration of membrane proteins that insert both dependently and independently of the Sec translocase complex, as well as at least some lipoproteins. Aids folding of multispanning membrane proteins. The sequence is that of Membrane protein insertase YidC from Agrobacterium fabrum (strain C58 / ATCC 33970) (Agrobacterium tumefaciens (strain C58)).